Here is a 358-residue protein sequence, read N- to C-terminus: 3'(2'),5'-bisphosphate nucleotidase 2 (358 aa).

The active-site Proton acceptor is aspartate 54. Residues glutamate 77, aspartate 141, isoleucine 143, and aspartate 144 each contribute to the Mg(2+) site. Threonine 146 functions as the Proton acceptor in the catalytic mechanism. Adenosine 3',5'-bisphosphate contacts are provided by threonine 146, histidine 243, serine 272, lysine 275, arginine 289, and aspartate 302. AMP contacts are provided by histidine 243, serine 272, lysine 275, arginine 289, and aspartate 302. Aspartate 302 contacts Mg(2+).

Belongs to the inositol monophosphatase superfamily. Mg(2+) serves as cofactor.

It catalyses the reaction 3'-phosphoadenylyl sulfate + H2O = adenosine 5'-phosphosulfate + phosphate. The catalysed reaction is adenosine 3',5'-bisphosphate + H2O = AMP + phosphate. The enzyme catalyses adenosine 2',5'-bisphosphate + H2O = AMP + phosphate. Functionally, phosphatase that converts adenosine 3'-phosphate 5'-phosphosulfate (PAPS) to adenosine 5'-phosphosulfate (APS) and 3'(2')-phosphoadenosine 5'-phosphate (PAP) to AMP. Regulates the flux of sulfur in the sulfur-activation pathway by converting PAPS to APS. Involved in salt tolerance. This chain is 3'(2'),5'-bisphosphate nucleotidase 2 (HAL22), found in Candida albicans (strain SC5314 / ATCC MYA-2876) (Yeast).